Reading from the N-terminus, the 391-residue chain is 3-ketoacyl-CoA thiolase (391 aa).

Residue cysteine 95 is the Acyl-thioester intermediate of the active site. Catalysis depends on proton acceptor residues histidine 347 and cysteine 377.

Belongs to the thiolase-like superfamily. Thiolase family. Heterotetramer of two alpha chains (FadB) and two beta chains (FadA).

It is found in the cytoplasm. It carries out the reaction an acyl-CoA + acetyl-CoA = a 3-oxoacyl-CoA + CoA. The protein operates within lipid metabolism; fatty acid beta-oxidation. Functionally, catalyzes the final step of fatty acid oxidation in which acetyl-CoA is released and the CoA ester of a fatty acid two carbons shorter is formed. The protein is 3-ketoacyl-CoA thiolase of Vibrio parahaemolyticus serotype O3:K6 (strain RIMD 2210633).